Consider the following 440-residue polypeptide: Golgi-associated RAB2 interactor protein 2 (440 aa).

Belongs to the GARIN family. Interacts with CALM1. In terms of tissue distribution, expressed in testis (at protein level).

It localises to the cell projection. The protein localises to the cilium. The protein resides in the flagellum. Functionally, seems to play a role in sperm motility. This chain is Golgi-associated RAB2 interactor protein 2, found in Mus musculus (Mouse).